The following is a 228-amino-acid chain: Endonuclease V (228 aa).

Mg(2+) is bound by residues aspartate 43 and aspartate 109.

Belongs to the endonuclease V family. Requires Mg(2+) as cofactor.

The protein localises to the cytoplasm. The enzyme catalyses Endonucleolytic cleavage at apurinic or apyrimidinic sites to products with a 5'-phosphate.. Its function is as follows. DNA repair enzyme involved in the repair of deaminated bases. Selectively cleaves double-stranded DNA at the second phosphodiester bond 3' to a deoxyinosine leaving behind the intact lesion on the nicked DNA. The protein is Endonuclease V of Dictyoglomus thermophilum (strain ATCC 35947 / DSM 3960 / H-6-12).